A 1094-amino-acid polypeptide reads, in one-letter code: RecBCD enzyme subunit RecB (1094 aa).

One can recognise a UvrD-like helicase ATP-binding domain in the interval 1–326 (MDRFELLGPL…YTLGVNWRSD (326 aa)). A DNA-binding and helicase activity, interacts with RecC region spans residues 1–713 (MDRFELLGPL…LLRGRRPGQS (713 aa)). Position 21–28 (21–28 (ASAGTGKT)) interacts with ATP. In terms of domain architecture, UvrD-like helicase C-terminal spans 357 to 613 (AGHRLASAPR…QIMTVFVAKG (257 aa)). Residues 775–1094 (TWRRTSYSDL…DLLDRGRLQS (320 aa)) form a nuclease activity, interacts with RecD and RecA region. Residues His838, Asp975, and Asp989 each contribute to the Mg(2+) site. The For nuclease activity role is filled by Asp989.

It belongs to the helicase family. UvrD subfamily. Heterotrimer of RecB, RecC and RecD. All subunits contribute to DNA-binding. Interacts with RecA. Mg(2+) is required as a cofactor.

It carries out the reaction Exonucleolytic cleavage (in the presence of ATP) in either 5'- to 3'- or 3'- to 5'-direction to yield 5'-phosphooligonucleotides.. It catalyses the reaction Couples ATP hydrolysis with the unwinding of duplex DNA by translocating in the 3'-5' direction.. The catalysed reaction is ATP + H2O = ADP + phosphate + H(+). Functionally, a helicase/nuclease that prepares dsDNA breaks (DSB) for recombinational DNA repair. Binds to DSBs and unwinds DNA via a highly rapid and processive ATP-dependent bidirectional helicase activity. In the holoenzyme this subunit contributes ATPase, 3'-5' helicase, exonuclease activity and loads RecA onto ssDNA. Unlike the case in E.coli, suppresses RecA-dependent homologous recombination, is instead required for single-strand annealing pathway repair of DSB. The sequence is that of RecBCD enzyme subunit RecB from Mycobacterium tuberculosis (strain CDC 1551 / Oshkosh).